The primary structure comprises 62 residues: MAVQQARTTPSKRGMRRSHDALKNAALSIEPTTGEVHRRHHISPDGFYRGRQVIKAKEQDEE.

Residues 28–62 (SIEPTTGEVHRRHHISPDGFYRGRQVIKAKEQDEE) are disordered.

It belongs to the bacterial ribosomal protein bL32 family.

In Thioalkalivibrio sulfidiphilus (strain HL-EbGR7), this protein is Large ribosomal subunit protein bL32.